A 328-amino-acid polypeptide reads, in one-letter code: Phosphate acyltransferase (328 aa).

The protein belongs to the PlsX family. Homodimer. Probably interacts with PlsY.

The protein localises to the cytoplasm. It carries out the reaction a fatty acyl-[ACP] + phosphate = an acyl phosphate + holo-[ACP]. It functions in the pathway lipid metabolism; phospholipid metabolism. Catalyzes the reversible formation of acyl-phosphate (acyl-PO(4)) from acyl-[acyl-carrier-protein] (acyl-ACP). This enzyme utilizes acyl-ACP as fatty acyl donor, but not acyl-CoA. This chain is Phosphate acyltransferase, found in Staphylococcus aureus (strain bovine RF122 / ET3-1).